The sequence spans 190 residues: Elongation factor P (190 aa).

It belongs to the elongation factor P family.

The protein localises to the cytoplasm. The protein operates within protein biosynthesis; polypeptide chain elongation. In terms of biological role, involved in peptide bond synthesis. Stimulates efficient translation and peptide-bond synthesis on native or reconstituted 70S ribosomes in vitro. Probably functions indirectly by altering the affinity of the ribosome for aminoacyl-tRNA, thus increasing their reactivity as acceptors for peptidyl transferase. This chain is Elongation factor P, found in Persephonella marina (strain DSM 14350 / EX-H1).